A 193-amino-acid polypeptide reads, in one-letter code: Naphthalene 1,2-dioxygenase system, small oxygenase component (193 aa).

It belongs to the bacterial ring-hydroxylating dioxygenase beta subunit family. The naphthalene dioxygenase (NDO) multicomponent enzyme system is composed of an electron transfer component and a dioxygenase component (iron sulfur protein (ISP)). The electron transfer component is composed of a ferredoxin reductase (NdoR) and a ferredoxin (NdoA), and the dioxygenase component is formed of a heterohexamer (trimer of heterodimers) of three large alpha subunits (NdoB) and three small beta subunits (NdoC).

It functions in the pathway aromatic compound metabolism; naphthalene degradation. Its function is as follows. Component of the naphthalene dioxygenase (NDO) multicomponent enzyme system which catalyzes the incorporation of both atoms of molecular oxygen into naphthalene to form cis-(1R,2S)-dihydroxy-1,2-dihydronaphthalene. The beta subunit seems to have a structural role in the holoenzyme. In Pseudomonas aeruginosa, this protein is Naphthalene 1,2-dioxygenase system, small oxygenase component.